A 352-amino-acid polypeptide reads, in one-letter code: tRNA pseudouridine synthase D (352 aa).

Asp-81 functions as the Nucleophile in the catalytic mechanism. Residues 157–303 (GVPNYFGGQR…MSHERRILRL (147 aa)) enclose the TRUD domain.

Belongs to the pseudouridine synthase TruD family.

The enzyme catalyses uridine(13) in tRNA = pseudouridine(13) in tRNA. Responsible for synthesis of pseudouridine from uracil-13 in transfer RNAs. This Pseudomonas putida (strain W619) protein is tRNA pseudouridine synthase D.